We begin with the raw amino-acid sequence, 424 residues long: Mitogen-activated protein kinase 9 (424 aa).

The Protein kinase domain maps to 26–321; the sequence is YQQLKPIGSG…VDEALRHPYI (296 aa). Residues 32–40 and lysine 55 contribute to the ATP site; that span reads IGSGAQGIV. Residue aspartate 151 is the Proton acceptor of the active site. Position 183 is a phosphothreonine; by MAP2K7 (threonine 183). Residues 183-185 carry the TXY motif; the sequence is TPY. Tyrosine 185 bears the Phosphotyrosine; by MAP2K4 mark. Positions 368-424 are disordered; sequence KNGVVKDQPSDAAVSSNATPSQSSSINDISSMSTEQTLASDTDSSLDASTGPLEGCR. Residues 388 to 417 show a composition bias toward low complexity; sequence SQSSSINDISSMSTEQTLASDTDSSLDAST.

This sequence belongs to the protein kinase superfamily. CMGC Ser/Thr protein kinase family. MAP kinase subfamily. Interacts with MECOM. Interacts with DCLK2. Binds to at least four scaffolding proteins, MAPK8IP1/JIP-1, MAPK8IP2/JIP-2, MAPK8IP3/JIP-3/JSAP1 and SPAG9/MAPK8IP4/JIP-4. These proteins also bind other components of the JNK signaling pathway. Interacts with NFATC4. Interacts with ATF7; the interaction does not phosphorylate ATF7 but acts as a docking site for ATF7-associated partners such as JUN. Interacts with BCL10. Interacts with CTNNB1 and GSK3B. Interacts with MAPKBP1. Interacts with POU5F1; phosphorylates POU5F1 at 'Ser-355'. Found in a complex with SH3RF1, RAC2, MAP3K7/TAK1, MAP2K7/MKK7, MAPK8IP1/JIP1 and MAPK8/JNK1. It depends on Mg(2+) as a cofactor. Post-translationally, dually phosphorylated on Thr-183 and Tyr-185 by MAP2K7 and MAP2K4, which activates the enzyme. Autophosphorylated in vitro.

It localises to the cytoplasm. It is found in the nucleus. It catalyses the reaction L-seryl-[protein] + ATP = O-phospho-L-seryl-[protein] + ADP + H(+). The enzyme catalyses L-threonyl-[protein] + ATP = O-phospho-L-threonyl-[protein] + ADP + H(+). With respect to regulation, activated by threonine and tyrosine phosphorylation by either of two dual specificity kinases, MAP2K4 and MAP2K7. MAP2K4 shows a strong preference for Tyr-185 while MAP2K7 phosphorylates Tyr-183 preferentially. Inhibited by dual specificity phosphatases, such as DUSP1. Its function is as follows. Serine/threonine-protein kinase involved in various processes such as cell proliferation, differentiation, migration, transformation and programmed cell death. Extracellular stimuli such as pro-inflammatory cytokines or physical stress stimulate the stress-activated protein kinase/c-Jun N-terminal kinase (SAP/JNK) signaling pathway. In this cascade, two dual specificity kinases MAP2K4/MKK4 and MAP2K7/MKK7 phosphorylate and activate MAPK9/JNK2. In turn, MAPK9/JNK2 phosphorylates a number of transcription factors, primarily components of AP-1 such as JUN and ATF2 and thus regulates AP-1 transcriptional activity. In response to oxidative or ribotoxic stresses, inhibits rRNA synthesis by phosphorylating and inactivating the RNA polymerase 1-specific transcription initiation factor RRN3. Promotes stressed cell apoptosis by phosphorylating key regulatory factors including TP53 and YAP1. In T-cells, MAPK8 and MAPK9 are required for polarized differentiation of T-helper cells into Th1 cells. Upon T-cell receptor (TCR) stimulation, is activated by CARMA1, BCL10, MAP2K7 and MAP3K7/TAK1 to regulate JUN protein levels. Plays an important role in the osmotic stress-induced epithelial tight-junctions disruption. When activated, promotes beta-catenin/CTNNB1 degradation and inhibits the canonical Wnt signaling pathway. Also participates in neurite growth in spiral ganglion neurons. Phosphorylates the CLOCK-BMAL1 heterodimer and plays a role in the regulation of the circadian clock. Phosphorylates POU5F1, which results in the inhibition of POU5F1's transcriptional activity and enhances its proteasomal degradation. Phosphorylates ALKBH5 in response to reactive oxygen species (ROS), promoting ALKBH5 sumoylation and inactivation. Functionally, MAPK9 isoforms display different binding patterns: alpha-1 and alpha-2 preferentially bind to JUN, whereas beta-1 and beta-2 bind to ATF2. However, there is no correlation between binding and phosphorylation, which is achieved at about the same efficiency by all isoforms. JUNB is not a substrate for JNK2 alpha-2, and JUND binds only weakly to it. In Homo sapiens (Human), this protein is Mitogen-activated protein kinase 9 (MAPK9).